Consider the following 508-residue polypeptide: Octopamine receptor beta-1R (508 aa).

The Extracellular segment spans residues 1–111; that stretch reads MTLLQRLQAM…SHLALVFVKC (111 aa). Residues 112–132 traverse the membrane as a helical segment; sequence FIIGFIILAAILGNMLVIVSV. Topologically, residues 133-139 are cytoplasmic; that stretch reads MRHRKLR. A helical membrane pass occupies residues 140-160; the sequence is IITNYFVVSLAVADMLVALCA. Residues 161 to 186 are Extracellular-facing; the sequence is MTFNASVMISGKWMFGSVMCDMWNSF. A glycan (N-linked (GlcNAc...) asparagine) is linked at Asn164. A helical transmembrane segment spans residues 187-209; sequence DVYFSTASIMHLCCISVDRYYAI. Residues 210-223 are Cytoplasmic-facing; that stretch reads VQPLDYPLIMTQRR. A helical membrane pass occupies residues 224–244; that stretch reads VFIMLLMVWLSPALLSFLPIC. Residues 245-270 lie on the Extracellular side of the membrane; it reads SGWYTTTENYKYLKSNPHICEFKVNK. Residues 271-291 form a helical membrane-spanning segment; that stretch reads AYAIVSSSMSFWIPGIVMLSM. The Cytoplasmic portion of the chain corresponds to 292–351; that stretch reads YYRIYQEADRQERLVYRSKVAALLLEKHLQISQIPKPRPSIQVEQSTISTMRRERKAART. The chain crosses the membrane as a helical span at residues 352 to 372; that stretch reads LGIIMSAFLICWLPFFLWYIV. The Extracellular segment spans residues 373 to 383; it reads SSLCDSCITPR. A helical membrane pass occupies residues 384–404; it reads LLVGILFWIGYFNSALNPIIY. Over 405–508 the chain is Cytoplasmic; it reads AYFNRDFRAA…MQQLHPLYTN (104 aa). The tract at residues 440–464 is disordered; it reads RDLEFGGPSRRGTNGAQRTGSGSAE. Residues 450-461 show a composition bias toward polar residues; the sequence is RGTNGAQRTGSG.

The protein belongs to the G-protein coupled receptor 1 family. In the adult, expressed in the superior protocerebrum and the optic lobe medulla of the central nervous system, nurse cells of egg chambers in the ovary at oogenic stages 1-10, and spermatogonia and spermatocytes in the testis. Expressed in embryonic and larval ventral nerve cord and brain lobe, and the larval imaginal disk and larval salivary gland. Also expressed in larval synaptic boutons and retinal cells in the optic disk.

It localises to the cell membrane. In terms of biological role, autoreceptor for octopamine, which is a neurotransmitter, neurohormone, and neuromodulator in invertebrates. Negatively regulates synaptic growth by activating the inhibitory G protein Galphao and limiting cAMP production. Antagonizes the action of Octbeta2R which stimulates synaptic growth. This is Octopamine receptor beta-1R from Drosophila melanogaster (Fruit fly).